A 206-amino-acid polypeptide reads, in one-letter code: Imidazoleglycerol-phosphate dehydratase (206 aa).

Belongs to the imidazoleglycerol-phosphate dehydratase family.

It is found in the cytoplasm. It carries out the reaction D-erythro-1-(imidazol-4-yl)glycerol 3-phosphate = 3-(imidazol-4-yl)-2-oxopropyl phosphate + H2O. Its pathway is amino-acid biosynthesis; L-histidine biosynthesis; L-histidine from 5-phospho-alpha-D-ribose 1-diphosphate: step 6/9. This Leptospira borgpetersenii serovar Hardjo-bovis (strain JB197) protein is Imidazoleglycerol-phosphate dehydratase.